Here is a 202-residue protein sequence, read N- to C-terminus: Small ribosomal subunit protein uS4c (202 aa).

In terms of domain architecture, S4 RNA-binding spans 90–154 (MRLDNILFRL…SQSIITKNLN (65 aa)).

It belongs to the universal ribosomal protein uS4 family. In terms of assembly, part of the 30S ribosomal subunit. Contacts protein S5. The interaction surface between S4 and S5 is involved in control of translational fidelity.

The protein localises to the plastid. It is found in the chloroplast. In terms of biological role, one of the primary rRNA binding proteins, it binds directly to 16S rRNA where it nucleates assembly of the body of the 30S subunit. Functionally, with S5 and S12 plays an important role in translational accuracy. The sequence is that of Small ribosomal subunit protein uS4c (rps4) from Monoclea forsteri (Liverwort).